The primary structure comprises 359 residues: MTQPVTVEVRTDPPYPVIIGTGLLDDLARVLDGRHKVAILHQPTLTQTAEVIRNHLADKGIDAHRIEIPDAEGGKELPVVGFIWEVLGRIGLGRKDAIVSLGGGAATDVAGFAAATWLRGVDIVHVPTTLLGMVDAAVGGKTGINTDAGKNLVGAFHQPAAVLIDLATLESLPRNEIVAGMAEIVKAGFIADPVILDMIEADPQAALDPTGQVLPELIRRAVVVKAEVVAADEKESQLREILNYGHTLAHAIERRERYQWRHGAAVSVGLVFAAELGRLAGRLDDATAERHRAILISLGLPVTYDADALPQLMEAMLGDKKTRAGVLRFVVLDGLGKPGRLEGPDPSLLAAAYAEVARS.

NAD(+) is bound by residues 70–75 (DAEGGK), 104–108 (GAATD), 128–129 (TT), lysine 141, and lysine 150. Glutamate 183, histidine 246, and histidine 262 together coordinate Zn(2+).

The protein belongs to the sugar phosphate cyclases superfamily. Dehydroquinate synthase family. Co(2+) serves as cofactor. Zn(2+) is required as a cofactor. The cofactor is NAD(+).

It localises to the cytoplasm. It catalyses the reaction 7-phospho-2-dehydro-3-deoxy-D-arabino-heptonate = 3-dehydroquinate + phosphate. It participates in metabolic intermediate biosynthesis; chorismate biosynthesis; chorismate from D-erythrose 4-phosphate and phosphoenolpyruvate: step 2/7. Its function is as follows. Catalyzes the conversion of 3-deoxy-D-arabino-heptulosonate 7-phosphate (DAHP) to dehydroquinate (DHQ). The chain is 3-dehydroquinate synthase from Mycolicibacterium vanbaalenii (strain DSM 7251 / JCM 13017 / BCRC 16820 / KCTC 9966 / NRRL B-24157 / PYR-1) (Mycobacterium vanbaalenii).